The chain runs to 521 residues: Probable cytochrome P450 12d1 distal, mitochondrial (521 aa).

Residues 1 to 19 (MNTLSSARSVAIYVGPVRS) constitute a mitochondrion transit peptide. C467 provides a ligand contact to heme.

This sequence belongs to the cytochrome P450 family. Requires heme as cofactor.

The protein localises to the mitochondrion membrane. In Drosophila melanogaster (Fruit fly), this protein is Probable cytochrome P450 12d1 distal, mitochondrial.